Consider the following 211-residue polypeptide: Protein-L-isoaspartate O-methyltransferase (211 aa).

Serine 60 is an active-site residue.

This sequence belongs to the methyltransferase superfamily. L-isoaspartyl/D-aspartyl protein methyltransferase family.

It localises to the cytoplasm. The catalysed reaction is [protein]-L-isoaspartate + S-adenosyl-L-methionine = [protein]-L-isoaspartate alpha-methyl ester + S-adenosyl-L-homocysteine. In terms of biological role, catalyzes the methyl esterification of L-isoaspartyl residues in peptides and proteins that result from spontaneous decomposition of normal L-aspartyl and L-asparaginyl residues. It plays a role in the repair and/or degradation of damaged proteins. In Alteromonas mediterranea (strain DSM 17117 / CIP 110805 / LMG 28347 / Deep ecotype), this protein is Protein-L-isoaspartate O-methyltransferase.